Reading from the N-terminus, the 233-residue chain is Probable septum site-determining protein MinC (233 aa).

The protein belongs to the MinC family. In terms of assembly, interacts with MinD and FtsZ.

In terms of biological role, cell division inhibitor that blocks the formation of polar Z ring septums. Rapidly oscillates between the poles of the cell to destabilize FtsZ filaments that have formed before they mature into polar Z rings. Prevents FtsZ polymerization. The sequence is that of Probable septum site-determining protein MinC from Proteus mirabilis (strain HI4320).